The primary structure comprises 469 residues: Glutamate--tRNA ligase (469 aa).

The 'HIGH' region motif lies at 8–18 (PSPTGFLHVGG). 4 residues coordinate Zn(2+): C97, C99, C124, and D126. Positions 236-240 (KLSKR) match the 'KMSKS' region motif. K239 lines the ATP pocket.

The protein belongs to the class-I aminoacyl-tRNA synthetase family. Glutamate--tRNA ligase type 1 subfamily. Monomer. The cofactor is Zn(2+).

It is found in the cytoplasm. It carries out the reaction tRNA(Glu) + L-glutamate + ATP = L-glutamyl-tRNA(Glu) + AMP + diphosphate. Catalyzes the attachment of glutamate to tRNA(Glu) in a two-step reaction: glutamate is first activated by ATP to form Glu-AMP and then transferred to the acceptor end of tRNA(Glu). This Francisella philomiragia subsp. philomiragia (strain ATCC 25017 / CCUG 19701 / FSC 153 / O#319-036) protein is Glutamate--tRNA ligase.